The chain runs to 158 residues: NAD(P)H-quinone oxidoreductase subunit J, chloroplastic (158 aa).

It belongs to the complex I 30 kDa subunit family. NDH is composed of at least 16 different subunits, 5 of which are encoded in the nucleus.

It localises to the plastid. It is found in the chloroplast thylakoid membrane. It catalyses the reaction a plastoquinone + NADH + (n+1) H(+)(in) = a plastoquinol + NAD(+) + n H(+)(out). The enzyme catalyses a plastoquinone + NADPH + (n+1) H(+)(in) = a plastoquinol + NADP(+) + n H(+)(out). In terms of biological role, NDH shuttles electrons from NAD(P)H:plastoquinone, via FMN and iron-sulfur (Fe-S) centers, to quinones in the photosynthetic chain and possibly in a chloroplast respiratory chain. The immediate electron acceptor for the enzyme in this species is believed to be plastoquinone. Couples the redox reaction to proton translocation, and thus conserves the redox energy in a proton gradient. The protein is NAD(P)H-quinone oxidoreductase subunit J, chloroplastic of Cucumis sativus (Cucumber).